Reading from the N-terminus, the 183-residue chain is Archaemetzincin (183 aa).

Zn(2+) is bound at residue His-131. Glu-132 (proton acceptor) is an active-site residue. Positions 135, 141, 142, 147, 166, and 169 each coordinate Zn(2+).

Belongs to the peptidase M54 family. As to quaternary structure, monomer. It depends on Zn(2+) as a cofactor.

In terms of biological role, probable zinc metalloprotease whose natural substrate is unknown. This is Archaemetzincin from Saccharolobus islandicus (strain Y.N.15.51 / Yellowstone #2) (Sulfolobus islandicus).